Reading from the N-terminus, the 88-residue chain is Actobindin (88 aa).

Position 1 is an N-acetylmethionine (M1). The segment at 1-22 (MNPELQSAIGQGAALKHAETVD) is disordered. The residue at position 35 (K35) is an N6,N6,N6-trimethyllysine. Residues 37–54 (DRSSFLEEVAKPHELKHA) enclose the WH2 domain. At K72 the chain carries N6,N6,N6-trimethyllysine.

In terms of assembly, monomer.

Its function is as follows. Is able to bind two actin monomers at high concentrations of G-actin. This is Actobindin from Acanthamoeba castellanii (Amoeba).